Here is a 161-residue protein sequence, read N- to C-terminus: Aklanonic acid methyl ester cyclase DauD (161 aa).

Glutamine 106 serves as a coordination point for substrate. Residues 137–161 are disordered; the sequence is WPTPEGWRPCPPPPRRRHDRSTDTP.

This sequence belongs to the polyketide cyclase DnrD family. In terms of assembly, homotetramer.

It catalyses the reaction methyl aklanonate = aklaviketone. It participates in antibiotic biosynthesis; daunorubicin biosynthesis. The protein operates within antibiotic biosynthesis; carminomycin biosynthesis. It functions in the pathway antibiotic biosynthesis; rhodomycin biosynthesis. Its pathway is antibiotic biosynthesis; aclacinomycin biosynthesis. Its function is as follows. Involved in the biosynthesis of aklavinone which is an important precursor common to the formation of the clinically significant anthracyclines such as carminomycin, daunorubicin (daunomycin), rhodomycin, aclacinomycin T (aklavin) and aclacinomycin A (aclarubicin). These compounds are aromatic polyketide antibiotics that exhibit high cytotoxicity and are widely applied in the chemotherapy of a variety of cancers. Catalyzes the cyclization of aklanonic acid methyl ester to yield aklaviketone. This chain is Aklanonic acid methyl ester cyclase DauD (dauD), found in Streptomyces sp. (strain C5).